The sequence spans 260 residues: Proliferating cell nuclear antigen (260 aa).

The DNA-binding element occupies 61-80 (RCDRNISMGMNLGSMSKILI).

This sequence belongs to the PCNA family. In terms of assembly, homotrimer. Forms a complex with activator 1 heteropentamer in the presence of ATP.

The protein localises to the nucleus. Its function is as follows. This protein is an auxiliary protein of DNA polymerase delta and is involved in the control of eukaryotic DNA replication by increasing the polymerase's processibility during elongation of the leading strand. The chain is Proliferating cell nuclear antigen (PCNA) from Bombyx mori (Silk moth).